A 760-amino-acid polypeptide reads, in one-letter code: Catecholate siderophore receptor Fiu (760 aa).

The N-terminal stretch at 1–31 (MENNRNFPARQFHSLTFFAGLCIGITPVAQA) is a signal peptide. Residues 67–175 (PVADTTRTMT…PTGSINMISK (109 aa)) form the TBDR plug domain. One can recognise a TBDR beta-barrel domain in the interval 180–760 (DSGIDASASI…TFLLTANMHF (581 aa)). The TonB C-terminal box signature appears at 743 to 760 (RYHPGEPRTFLLTANMHF).

This sequence belongs to the TonB-dependent receptor family.

Its subcellular location is the cell outer membrane. In terms of biological role, involved in the active transport across the outer membrane of iron complexed with catecholate siderophores such as dihydroxybenzoylserine and dihydroxybenzoate. It derives its energy for transport by interacting with the trans-periplasmic membrane protein TonB. Can also transport catechol-substituted cephalosporins. Receptor for microcins M, H47 and E492. The chain is Catecholate siderophore receptor Fiu (fiu) from Escherichia coli O157:H7.